Reading from the N-terminus, the 369-residue chain is Anhydro-N-acetylmuramic acid kinase (369 aa).

An ATP-binding site is contributed by 12–19 (GTSLDGVD).

Belongs to the anhydro-N-acetylmuramic acid kinase family.

It carries out the reaction 1,6-anhydro-N-acetyl-beta-muramate + ATP + H2O = N-acetyl-D-muramate 6-phosphate + ADP + H(+). The protein operates within amino-sugar metabolism; 1,6-anhydro-N-acetylmuramate degradation. It functions in the pathway cell wall biogenesis; peptidoglycan recycling. Catalyzes the specific phosphorylation of 1,6-anhydro-N-acetylmuramic acid (anhMurNAc) with the simultaneous cleavage of the 1,6-anhydro ring, generating MurNAc-6-P. Is required for the utilization of anhMurNAc either imported from the medium or derived from its own cell wall murein, and thus plays a role in cell wall recycling. This Escherichia coli O7:K1 (strain IAI39 / ExPEC) protein is Anhydro-N-acetylmuramic acid kinase.